The chain runs to 1377 residues: Pleckstrin homology-like domain family B member 1 (1377 aa).

Ser-51 carries the post-translational modification Phosphoserine. In terms of domain architecture, FHA spans Thr-64–Gly-125. Arg-131 is subject to Asymmetric dimethylarginine. The disordered stretch occupies residues Arg-150–Ser-187. Polar residues predominate over residues Ser-165–Arg-178. A phosphoserine mark is found at Ser-192, Ser-220, and Ser-223. Disordered stretches follow at residues Ala-211–Ser-334 and Gly-370–Ser-535. Residues Ser-252–Ser-273 show a composition bias toward low complexity. Over residues Arg-288–Pro-303 the composition is skewed to polar residues. A compositionally biased stretch (basic and acidic residues) spans Glu-309–Pro-322. Residues Ser-324, Ser-334, Ser-381, Ser-404, Ser-430, Ser-443, Ser-461, Ser-470, Ser-489, and Ser-501 each carry the phosphoserine modification. Residues Glu-456–Pro-473 are compositionally biased toward low complexity. Positions Lys-481–Arg-491 are enriched in basic and acidic residues. Residue Arg-512 is modified to Omega-N-methylarginine. 2 positions are modified to phosphoserine: Ser-518 and Ser-520. Residue Thr-522 is modified to Phosphothreonine. Ser-533, Ser-539, Ser-551, Ser-555, Ser-563, Ser-578, and Ser-583 each carry phosphoserine. A compositionally biased stretch (low complexity) spans Pro-653–Arg-663. Disordered regions lie at residues Pro-653 to Thr-707, Thr-936 to Pro-1019, and Ser-1119 to Ser-1138. Over residues Glu-677–Cys-691 the composition is skewed to basic and acidic residues. Phosphoserine is present on Ser-678. Positions Asp-683–Glu-809 form a coiled coil. Phosphoserine is present on residues Ser-971 and Ser-1017. Positions Ser-971–Ser-992 are enriched in low complexity. The span at Leu-1009 to Leu-1018 shows a compositional bias: polar residues. The stretch at Asp-1144–Glu-1208 forms a coiled coil. The PH domain maps to Ser-1256–Glu-1370.

This chain is Pleckstrin homology-like domain family B member 1 (PHLDB1), found in Homo sapiens (Human).